Reading from the N-terminus, the 1322-residue chain is MSPSKYLLTPPEELHPLTDSNPQIYPDFDPWIHTKEEDKILKEFVAKGYYTASRVNFETISARSALQGSLPKVSSLLGDELSKIIEIREQEINRISTLDIEDSTRFTKWSGQDFHLPNRVTLTDQKRNLWLQELSSSNTSLRKLTKSVPHGFRKRHILEQCYTQFVPIYRVIWLIKSCYAIEWKGMISKAKGETTHEELLSTLYKDWTDNMVLILEKLVFEVSKYYNDPGQLKYWKLRIAHYLKILGNCYEMELLNRSTLHQWLVDFLSKIESFEFYPMTLHILSIFWSGILGTTEEDTEIESSFLIIKLSEILLRKYHIISESKCMINDSKYIINDVQRNSKLKESVLLRLRQFISHIFHTQSLEAFIMPKQNWNIYKNYLYQILLQNVSDEETPKLKKKLKLISYRNESLRLGSLDVEPSRETSPFSTELTLDNVFSGNILNLKNVSPELLGVLDSGLSGSEWSLFIDQKITKMEQVIEIILWAINPSRKHRYDSCHLVAKILVLKINSQESFQEYSIEDVIWSLIFHFSKLSKLELQKIVWLPKLHQLLNVFIGYGIIKVPTYIRRLISSGVLYLPESENKNFHCKLLINLKISPIMKSQYNMVLKNVMEYAPHFYEKYNFDKLVSIFESLKPKLLSGDFERLEEYPGSIRIMCSEWYLSQICFNQGELQKVNNHKIIKTFQLFCINLGELHHFFGWAEYIVYHQLIDDLENLEVFTDILLYLDKAFLLLINDHILFMKTLLHSYMRDLRIKDKAAFELINFKSFWKFFVKNCANMIEMDSSLQNQIAEVFELERHRKDHFTKMPNETVSLYLEITGNKNTKFEEQNFPSVIQQNIKKVLHNPEDESNCRKLLLLCKASHASEYNKFLSIFVKRGDFTVHELLKLISLKLLSFEVIQKTSHFDLLCELVSQVSFNYGLNFENEKNAFVKRNFKQITLQLFSRPTFRDTLVRMLVEYGPNSNLSEKSAQVVSHILREEKNMSIIRDMLIYGMNIENEAIDNTIDLYRYLNFTNTWLFQILTEFNVKNSNAEDLSDFFSSIVGAIGYNSLLPKIFSNISDKKQVSTLLTVIERQFLARVLETEKSALVFLHIMMDTEIVLSRHLVNMSSLGMDSEVLELFKNTIATFAKMPNDTLKKYDENLNELLKIVIIHEKFILRHCFESIELRDHYMVDNFYTLFHNTGKDLKLKLLLYDLLTSLKSYILNETKDQALHSIKMPSVLNQLPKFAISSFLDSEGTEDEFLDKDEPSLIRLGICDKQAKTNSALKYFVFNKKSSQFDCIFKIEPFQYLVNYQEPLEGELNNTSLSLGLFDARLEKTNPS.

A disordered region spans residues 1 to 21; it reads MSPSKYLLTPPEELHPLTDSN.

This sequence belongs to the Mediator complex subunit 12 family. Component of the SRB8-11 complex, which itself associates with the Mediator complex.

The protein localises to the nucleus. In terms of biological role, component of the SRB8-11 complex. The SRB8-11 complex is a regulatory module of the Mediator complex which is itself involved in regulation of basal and activated RNA polymerase II-dependent transcription. The SRB8-11 complex may be involved in the transcriptional repression of a subset of genes regulated by Mediator. It may inhibit the association of the Mediator complex with RNA polymerase II to form the holoenzyme complex. This Kluyveromyces lactis (strain ATCC 8585 / CBS 2359 / DSM 70799 / NBRC 1267 / NRRL Y-1140 / WM37) (Yeast) protein is Mediator of RNA polymerase II transcription subunit 12 (SRB8).